A 704-amino-acid chain; its full sequence is Glycogen [starch] synthase, liver (704 aa).

At Ser-8 the chain carries Phosphoserine; by AMPK and PKA. At Ser-11 the chain carries Phosphoserine. Residue Lys-40 participates in UDP binding. UDP-alpha-D-glucose is bound by residues His-205 and Arg-211. Residues His-291, Glu-292, Gln-294, His-297, and Lys-301 each coordinate alpha-D-glucose 6-phosphate. Arg-331 serves as a coordination point for UDP. Position 331 (Arg-331) interacts with UDP-alpha-D-glucose. Residue His-501 coordinates alpha-D-glucose 6-phosphate. The UDP-alpha-D-glucose site is built by Glu-510, Trp-512, and Gly-513. Thr-515 is a UDP binding site. Positions 582 and 586 each coordinate alpha-D-glucose 6-phosphate. The tract at residues 620 to 704 is disordered; that stretch reads KFHLEPTSPP…KKKLHGEYKN (85 aa). Position 627 is a phosphoserine (Ser-627). Residues Ser-641, Ser-645, Ser-649, and Ser-653 each carry the phosphoserine; by GSK3-alpha and GSK3-beta modification. Positions 647–657 are enriched in low complexity; it reads SGSQASSPQCS. Ser-657 is subject to Phosphoserine; by CK2. Residues 658-675 show a composition bias toward acidic residues; that stretch reads DAEDEEDEDERYDEEEEA. A Phosphoserine modification is found at Ser-684.

Belongs to the glycosyltransferase 3 family. In terms of assembly, part of the glycogen synthase (GS)-glycogenin complex, a heterooctamer composed of a tetramer of GS and 2 dimers of glycogenin, where each GS protomer binds to one glycogenin subunit (via glycogenin C-terminus); the GS tetramer may dissociate from glycogenin dimers to continue glycogen polymerization on its own. May also form a heterooctamer complex with GYG1 (via GYG1 C-terminus). In terms of processing, phosphorylation reduces the activity towards UDP-alpha-D-glucose. Primed phosphorylation at Ser-657 (site 5) by CSNK2A1 and CSNK2A2 is required for inhibitory phosphorylation at Ser-641 (site 3a), Ser-645 (site 3b), Ser-649 (site 3c) and Ser-653 (site 4) by GSK3A an GSK3B. Dephosphorylation at Ser-641 and Ser-645 by PP1 activates the enzyme. Phosphorylation at Ser-8 is not required for interaction with GYG1. Interaction with GYG1 does not regulate the phosphorylation at Ser-8 and Ser-641. As to expression, specifically expressed in liver.

It catalyses the reaction [(1-&gt;4)-alpha-D-glucosyl](n) + UDP-alpha-D-glucose = [(1-&gt;4)-alpha-D-glucosyl](n+1) + UDP + H(+). Its pathway is glycan biosynthesis; glycogen biosynthesis. Its activity is regulated as follows. Allosteric activation by glucose-6-phosphate. Phosphorylation reduces the activity towards UDP-glucose. When in the non-phosphorylated state, glycogen synthase does not require glucose-6-phosphate as an allosteric activator; when phosphorylated it does. Functionally, glycogen synthase participates in the glycogen biosynthetic process along with glycogenin and glycogen branching enzyme. Extends the primer composed of a few glucose units formed by glycogenin by adding new glucose units to it. In this context, glycogen synthase transfers the glycosyl residue from UDP-Glc to the non-reducing end of alpha-1,4-glucan. The sequence is that of Glycogen [starch] synthase, liver from Mus musculus (Mouse).